A 659-amino-acid chain; its full sequence is Mitochondrial Rho GTPase 1 (659 aa).

Residues 1–631 (MTKTRIRIVV…LTNDIDYRQT (631 aa)) lie on the Cytoplasmic side of the membrane. Residues 3–183 (KTRIRIVVCG…FYLCQRTITN (181 aa)) form the Miro 1 domain. GTP-binding positions include 12–19 (GDSGVGKT), 61–63 (DTG), and 115–118 (NKCD). EF-hand domains lie at 199–234 (LGVL…CFSK) and 328–363 (LGYR…TPGL). Residues Asp212, Asp214, Asp216, Glu223, Asp341, Asp343, Asp345, and Glu352 each contribute to the Ca(2+) site. In terms of domain architecture, Miro 2 spans 444–609 (RKVLNCYMLG…FIKLTEVALE (166 aa)). GTP is bound by residues 453–460 (GKGNSGKS), 489–493 (ELKGG), and 558–561 (LKAD). Residues 632-652 (IVAISSVVGFASLFTFTALKI) form a helical; Anchor for type IV membrane protein membrane-spanning segment. Topologically, residues 653–659 (YSSFKNT) are mitochondrial intermembrane.

Belongs to the mitochondrial Rho GTPase family.

Its subcellular location is the mitochondrion outer membrane. In terms of biological role, mitochondrial GTPase involved in mitochondrial trafficking. Probably involved in control of anterograde transport of mitochondria and their subcellular distribution. This Kluyveromyces lactis (strain ATCC 8585 / CBS 2359 / DSM 70799 / NBRC 1267 / NRRL Y-1140 / WM37) (Yeast) protein is Mitochondrial Rho GTPase 1 (GEM1).